A 520-amino-acid polypeptide reads, in one-letter code: Amine oxidase [flavin-containing] B (520 aa).

Ser2 carries the N-acetylserine modification. The Cytoplasmic segment spans residues 2 to 489; the sequence is SSKCDVVVVG…TFLERHLPSV (488 aa). The residue at position 52 (Lys52) is an N6-acetyllysine. Position 397 is an S-8alpha-FAD cysteine (Cys397). A helical; Anchor for type IV membrane protein membrane pass occupies residues 490–516; the sequence is PGLLRLIGLTAIFSATALGYLAHKRGL. At 517-520 the chain is on the mitochondrial intermembrane side; that stretch reads LVRV.

The protein belongs to the flavin monoamine oxidase family. Monomer, homo- or heterodimer (containing two subunits of similar size). Each subunit contains a covalently bound flavin. Enzymatically active as monomer. The cofactor is FAD.

The protein localises to the mitochondrion outer membrane. The catalysed reaction is a secondary aliphatic amine + O2 + H2O = a primary amine + an aldehyde + H2O2. It catalyses the reaction (R)-adrenaline + O2 + H2O = (R)-3,4-dihydroxymandelaldehyde + methylamine + H2O2. The enzyme catalyses a primary methyl amine + O2 + H2O = an aldehyde + H2O2 + NH4(+). It carries out the reaction benzylamine + O2 + H2O = benzaldehyde + H2O2 + NH4(+). The catalysed reaction is dopamine + O2 + H2O = 3,4-dihydroxyphenylacetaldehyde + H2O2 + NH4(+). It catalyses the reaction tyramine + O2 + H2O = (4-hydroxyphenyl)acetaldehyde + H2O2 + NH4(+). The enzyme catalyses (R)-noradrenaline + O2 + H2O = (R)-3,4-dihydroxymandelaldehyde + H2O2 + NH4(+). It carries out the reaction 2-phenylethylamine + O2 + H2O = 2-phenylacetaldehyde + H2O2 + NH4(+). The catalysed reaction is N-acetylputrescine + O2 + H2O = 4-acetamidobutanal + H2O2 + NH4(+). Functionally, catalyzes the oxidative deamination of primary and some secondary amines such as neurotransmitters, and exogenous amines including the tertiary amine, neurotoxin 1-methyl-4-phenyl-1,2,3,6-tetrahydropyridine (MPTP), with concomitant reduction of oxygen to hydrogen peroxide and participates in the metabolism of neuroactive and vasoactive amines in the central nervous system and peripheral tissues. Preferentially degrades benzylamine and phenylethylamine. In Sus scrofa (Pig), this protein is Amine oxidase [flavin-containing] B.